Here is a 428-residue protein sequence, read N- to C-terminus: MQHTIKNVSETEQQLEIILSAEEFNPEVELEIQDAKKNIQIKGFRKGHVPVGLIKKLMGPAIEASVAEKLASKYFGEIAEKETIKPASRAQLDNFSFNDDQLTITLSYEIHPEFELKDFSGYSFVEDLYTVSDEDVQNEINLILKGHGTLVSVDEAATSNDTVIADLIKLDAEGKEIEEQKTENHHFNLEYLPEDNPFKKALTGAKAEETVNVDIEPKEEGEEKVSYEISVKEVKRMELPELTDELLKEITQEKFDSIDAFTQDVRQQLEEHFSGKSEQDLLESISSKLIEENPVATPSAMVDSFENMLIENAKRQFGGNFPAGFDDTELRASMRPNAVKHAQWMLISQKIAETNNLEVTDEDIKAYAEKEAEKNPSVKAEELINTYMSTEFKDYMIDTILKDKIYGIIKSSVTIQGENKAIPKHNHR.

Positions 165 to 240 constitute a PPIase FKBP-type domain; the sequence is ADLIKLDAEG…VKEVKRMELP (76 aa).

This sequence belongs to the FKBP-type PPIase family. Tig subfamily.

The protein localises to the cytoplasm. It carries out the reaction [protein]-peptidylproline (omega=180) = [protein]-peptidylproline (omega=0). Functionally, involved in protein export. Acts as a chaperone by maintaining the newly synthesized protein in an open conformation. Functions as a peptidyl-prolyl cis-trans isomerase. The sequence is that of Trigger factor from Prosthecochloris aestuarii (strain DSM 271 / SK 413).